A 218-amino-acid chain; its full sequence is Glutathione S-transferase Mu 4 (218 aa).

A GST N-terminal domain is found at 1-88 (MPMTLGYWDI…YIARKHNLCG (88 aa)). Residues 7–8 (YW), 46–50 (WLSEK), 59–60 (NL), and 72–73 (QS) each bind glutathione. Residues 90–208 (TEEEKIRVDI…KTSRFLRTPL (119 aa)) form the GST C-terminal domain. Tyr116 lines the substrate pocket.

The protein belongs to the GST superfamily. Mu family. In terms of assembly, homodimer.

It is found in the cytoplasm. The enzyme catalyses RX + glutathione = an S-substituted glutathione + a halide anion + H(+). It catalyses the reaction 1-chloro-2,4-dinitrobenzene + glutathione = 2,4-dinitrophenyl-S-glutathione + chloride + H(+). The catalysed reaction is (13S,14S)-epoxy-(4Z,7Z,9E,11E,16Z,19Z)-docosahexaenoate + glutathione = (13R)-S-glutathionyl-(14S)-hydroxy-(4Z,7Z,9E,11E,16Z,19Z)-docosahexaenoate. It carries out the reaction leukotriene C4 = leukotriene A4 + glutathione. Its function is as follows. Conjugation of reduced glutathione to a wide number of exogenous and endogenous hydrophobic electrophiles. Catalyzes the conjugation of leukotriene A4 with reduced glutathione (GSH) to form leukotriene C4. Can also catalyze the transfer of a glutathionyl group from glutathione (GSH) to 13(S),14(S)-epoxy-docosahexaenoic acid to form maresin conjugate in tissue regeneration 1 (MCTR1), a bioactive lipid mediator that possess potent anti-inflammatory and proresolving actions. This is Glutathione S-transferase Mu 4 (Gstm4) from Rattus norvegicus (Rat).